The primary structure comprises 539 residues: Alpha-aminoadipic semialdehyde dehydrogenase (539 aa).

The transit peptide at 1–26 (MLRLARPLCVQTVKASKLSRLWSRPA) directs the protein to the mitochondrion. Residues lysine 86, lysine 94, and lysine 97 each carry the N6-acetyllysine; alternate modification. N6-succinyllysine; alternate is present on residues lysine 86, lysine 94, and lysine 97. Residues 192–194 (TAF), lysine 218, 258–259 (GT), 274–275 (GS), 274–279 (GSTQVG), and 296–297 (EL) each bind NAD(+). Glutamate 296 serves as the catalytic Proton acceptor. Catalysis depends on cysteine 330, which acts as the Nucleophile. Threonine 331 is a binding site for (S)-2-amino-6-oxohexanoate. Glutamate 427 is a binding site for NAD(+). Lysine 462 bears the N6-acetyllysine mark. Residues glycine 489 and alanine 490 each coordinate (S)-2-amino-6-oxohexanoate. Lysine 500 carries the post-translational modification N6-acetyllysine. The residue at position 537 (lysine 537) is an N6-succinyllysine.

It belongs to the aldehyde dehydrogenase family. Homotetramer. In terms of tissue distribution, abundant in kidney, liver, cochlea and outer hair cells but not inner hair cells or vestibular type I hair cells. Very low levels in lung, brain, intestine and pancreas.

The protein resides in the cytoplasm. It localises to the cytosol. Its subcellular location is the nucleus. The protein localises to the mitochondrion. The catalysed reaction is nonanal + NAD(+) + H2O = nonanoate + NADH + 2 H(+). It catalyses the reaction (S)-2-amino-6-oxohexanoate + NAD(+) + H2O = L-2-aminoadipate + NADH + 2 H(+). It carries out the reaction betaine aldehyde + NAD(+) + H2O = glycine betaine + NADH + 2 H(+). The enzyme catalyses an aldehyde + NAD(+) + H2O = a carboxylate + NADH + 2 H(+). The catalysed reaction is hexanal + NAD(+) + H2O = hexanoate + NADH + 2 H(+). It catalyses the reaction octanal + NAD(+) + H2O = octanoate + NADH + 2 H(+). It carries out the reaction (E)-non-2-enal + NAD(+) + H2O = (E)-non-2-enoate + NADH + 2 H(+). The enzyme catalyses (E)-4-hydroxynon-2-enal + NAD(+) + H2O = (E)-4-hydroxynon-2-enoate + NADH + 2 H(+). Its pathway is amine and polyamine biosynthesis; betaine biosynthesis via choline pathway; betaine from betaine aldehyde: step 1/1. In terms of biological role, multifunctional enzyme mediating important protective effects. Metabolizes betaine aldehyde to betaine, an important cellular osmolyte and methyl donor. Protects cells from oxidative stress by metabolizing a number of lipid peroxidation-derived aldehydes. Involved in lysine catabolism. This is Alpha-aminoadipic semialdehyde dehydrogenase from Rattus norvegicus (Rat).